A 553-amino-acid polypeptide reads, in one-letter code: Efflux pump alnA (553 aa).

The span at 1–21 (MSSDDTVKQEHSCSADSEKQD) shows a compositional bias: basic and acidic residues. The segment at 1–36 (MSSDDTVKQEHSCSADSEKQDSSCASDNEQPKEPQS) is disordered. 13 helical membrane-spanning segments follow: residues 40-60 (IHGL…FLFA), 85-105 (WSGV…LQIF), 110-130 (IKWM…ICGA), 136-156 (MLIG…VGVM), 174-194 (AMGL…GAFT), 202-222 (WSFY…IFLL), 243-263 (LVGT…INFA), 270-290 (SEPG…VFGI), 319-339 (LLFV…YVIP), 355-375 (VRLL…GYLA), 382-402 (IPWY…MYTI), 413-433 (GYSS…HAVA), and 522-542 (TYIL…GMKW).

The protein belongs to the major facilitator superfamily. TCR/Tet family.

The protein localises to the cell membrane. Functionally, efflux pump; part of the gene cluster that mediates the biosynthesis of asperlin, a polyketide showing anti-inflammatory, antitumor and antibiotic activities. Is probably involved in the efflux of asperlin. The sequence is that of Efflux pump alnA from Emericella nidulans (strain FGSC A4 / ATCC 38163 / CBS 112.46 / NRRL 194 / M139) (Aspergillus nidulans).